Here is a 125-residue protein sequence, read N- to C-terminus: Phosphoribosyl-AMP cyclohydrolase (125 aa).

Position 91 (D91) interacts with Mg(2+). C92 serves as a coordination point for Zn(2+). Mg(2+) is bound by residues D93 and D95. Positions 108 and 115 each coordinate Zn(2+).

This sequence belongs to the PRA-CH family. As to quaternary structure, homodimer. The cofactor is Mg(2+). Zn(2+) is required as a cofactor.

The protein localises to the cytoplasm. It carries out the reaction 1-(5-phospho-beta-D-ribosyl)-5'-AMP + H2O = 1-(5-phospho-beta-D-ribosyl)-5-[(5-phospho-beta-D-ribosylamino)methylideneamino]imidazole-4-carboxamide. It participates in amino-acid biosynthesis; L-histidine biosynthesis; L-histidine from 5-phospho-alpha-D-ribose 1-diphosphate: step 3/9. Functionally, catalyzes the hydrolysis of the adenine ring of phosphoribosyl-AMP. The chain is Phosphoribosyl-AMP cyclohydrolase from Streptomyces griseus subsp. griseus (strain JCM 4626 / CBS 651.72 / NBRC 13350 / KCC S-0626 / ISP 5235).